The chain runs to 61 residues: Large ribosomal subunit protein bL28 (61 aa).

It belongs to the bacterial ribosomal protein bL28 family.

The chain is Large ribosomal subunit protein bL28 from Nocardioides sp. (strain ATCC BAA-499 / JS614).